The chain runs to 709 residues: ATP-binding cassette sub-family F member 3 (709 aa).

Alanine 2 carries the post-translational modification N-acetylalanine. The span at arginine 129 to leucine 143 shows a compositional bias: basic and acidic residues. The tract at residues arginine 129–glycine 171 is disordered. Residues serine 155, serine 157, and serine 161 each carry the phosphoserine modification. Positions serine 161–glycine 171 are enriched in basic and acidic residues. 2 ABC transporter domains span residues valine 178–glutamine 424 and leucine 492–glycine 707. An ATP-binding site is contributed by glycine 210–threonine 217. Position 283 is a phosphoserine (serine 283). Glycine 525 to serine 532 serves as a coordination point for ATP.

Belongs to the ABC transporter superfamily. ABCF family. EF3 subfamily.

Displays an antiviral effect against flaviviruses such as west Nile virus (WNV) in the presence of OAS1B. The protein is ATP-binding cassette sub-family F member 3 (Abcf3) of Rattus norvegicus (Rat).